A 154-amino-acid polypeptide reads, in one-letter code: Large ribosomal subunit protein uL13 (154 aa).

The protein belongs to the universal ribosomal protein uL13 family. Part of the 50S ribosomal subunit.

Its function is as follows. This protein is one of the early assembly proteins of the 50S ribosomal subunit, although it is not seen to bind rRNA by itself. It is important during the early stages of 50S assembly. The polypeptide is Large ribosomal subunit protein uL13 (Sinorhizobium medicae (strain WSM419) (Ensifer medicae)).